Here is a 1562-residue protein sequence, read N- to C-terminus: DNA-directed RNA polymerase subunit beta'' (1562 aa).

The segment at 1 to 22 (MVKKKKFKTKNIQNPPFSSQNS) is disordered. Residues 11–22 (NIQNPPFSSQNS) show a composition bias toward polar residues. The Zn(2+) site is built by Cys-275, Cys-338, Cys-345, and Cys-348.

Belongs to the RNA polymerase beta' chain family. RpoC2 subfamily. In terms of assembly, in plastids the minimal PEP RNA polymerase catalytic core is composed of four subunits: alpha, beta, beta', and beta''. When a (nuclear-encoded) sigma factor is associated with the core the holoenzyme is formed, which can initiate transcription. It depends on Zn(2+) as a cofactor.

It is found in the plastid. The protein resides in the chloroplast. It catalyses the reaction RNA(n) + a ribonucleoside 5'-triphosphate = RNA(n+1) + diphosphate. Functionally, DNA-dependent RNA polymerase catalyzes the transcription of DNA into RNA using the four ribonucleoside triphosphates as substrates. This Chlorella vulgaris (Green alga) protein is DNA-directed RNA polymerase subunit beta''.